A 277-amino-acid chain; its full sequence is Large ribosomal subunit protein uL2 (277 aa).

Disordered stretches follow at residues 24 to 55 and 221 to 277; these read ITTS…RHHG and RGSV…RKKK.

It belongs to the universal ribosomal protein uL2 family. Part of the 50S ribosomal subunit. Forms a bridge to the 30S subunit in the 70S ribosome.

Its function is as follows. One of the primary rRNA binding proteins. Required for association of the 30S and 50S subunits to form the 70S ribosome, for tRNA binding and peptide bond formation. It has been suggested to have peptidyltransferase activity; this is somewhat controversial. Makes several contacts with the 16S rRNA in the 70S ribosome. The polypeptide is Large ribosomal subunit protein uL2 (Listeria welshimeri serovar 6b (strain ATCC 35897 / DSM 20650 / CCUG 15529 / CIP 8149 / NCTC 11857 / SLCC 5334 / V8)).